A 103-amino-acid polypeptide reads, in one-letter code: Putative RNA-binding protein RbpB (103 aa).

The 78-residue stretch at 2-79 (SIYVGNLSYD…RDLKVNKAKP (78 aa)) folds into the RRM domain. A compositionally biased stretch (basic and acidic residues) spans 74–85 (VNKAKPREDRGG). Residues 74–103 (VNKAKPREDRGGSRGSFGGNRSNNNFRNRY) form a disordered region. Residues 92-103 (GNRSNNNFRNRY) are compositionally biased toward low complexity.

The sequence is that of Putative RNA-binding protein RbpB (rbpB) from Nostoc sp. (strain PCC 7120 / SAG 25.82 / UTEX 2576).